We begin with the raw amino-acid sequence, 292 residues long: MPWLQVRLAISPEQAETYEDAFLEVGAVSVTFMDAEDQPIFEPELNTTPLWSHTHLLALFEGGTEAASVLAHMELLTGGPLPEHHSEVIEDQDWERSWMDNFQPMRFGQRLWIVPSWHAAPEPEAVNLLLDPGLAFGTGTHPTTALCLEWLDGQDLKDCNVLDFGCGSGILAIAALLLGAKQAVGTDIDVQALEASRDNAGRNGIADELFPLYLPEQLPQVQADVLVANILAGPLVALAPQLSGLVKSGGRLALSGILAEQGEEVAAAYAQDFDLDPIATLDGWVRITGRRR.

Residues T144, G165, D187, and N229 each contribute to the S-adenosyl-L-methionine site.

The protein belongs to the methyltransferase superfamily. PrmA family.

Its subcellular location is the cytoplasm. It catalyses the reaction L-lysyl-[protein] + 3 S-adenosyl-L-methionine = N(6),N(6),N(6)-trimethyl-L-lysyl-[protein] + 3 S-adenosyl-L-homocysteine + 3 H(+). Its function is as follows. Methylates ribosomal protein L11. In Pseudomonas fluorescens (strain ATCC BAA-477 / NRRL B-23932 / Pf-5), this protein is Ribosomal protein L11 methyltransferase.